The primary structure comprises 172 residues: Large ribosomal subunit protein bL17 (172 aa).

Residues 127–172 form a disordered region; that stretch reads KAAKQDRAKRVKGSKKVTGDVAPAVAPVPSAPAETQEEAKAPESAE. Residues 147–159 show a composition bias toward low complexity; that stretch reads VAPAVAPVPSAPA. The span at 163 to 172 shows a compositional bias: basic and acidic residues; sequence EEAKAPESAE.

Belongs to the bacterial ribosomal protein bL17 family. Part of the 50S ribosomal subunit. Contacts protein L32.

The protein is Large ribosomal subunit protein bL17 of Chlorobium luteolum (strain DSM 273 / BCRC 81028 / 2530) (Pelodictyon luteolum).